The following is a 792-amino-acid chain: Ubiquitin carboxyl-terminal hydrolase 10 (792 aa).

A DHR2-binding module region spans residues 2–27 (TTQESIKPLVDRILSNPLQFNAAMIS). Disordered regions lie at residues 64–87 (AESK…NTVP) and 103–320 (KDAA…SITP). A compositionally biased stretch (low complexity) spans 107 to 129 (DATGAKKSAELSTELSTEPPSSS). Residues 109 to 145 (TGAKKSAELSTELSTEPPSSSSEDDKVGKEEEEEGEI) are SIR4-binding module. A compositionally biased stretch (basic and acidic residues) spans 144–171 (EIFHEARDYVEPRKASLKERDNADKGDG). A UTP22-binding module region spans residues 167–208 (DKGDGEDIGEDIGEDIGEDIGEDIGEDIGENLGSPLATIDDS). The span at 172-195 (EDIGEDIGEDIGEDIGEDIGEDIG) shows a compositional bias: acidic residues. Residues 211–220 (ENEKEKRKEL) are compositionally biased toward basic and acidic residues. Positions 226-241 (SDDEIEDDEDEDDMDY) are enriched in acidic residues. The segment covering 288-297 (VNNTKENGNR) has biased composition (polar residues). The USP domain maps to 362–733 (RGLLNHGVTC…NAYYLLYTRL (372 aa)). Catalysis depends on cysteine 371, which acts as the Nucleophile. A disordered region spans residues 526–563 (LDPNSDLSSDSINGTSATTSTTTSNAATKPSLSSSSSV). Over residues 530-539 (SDLSSDSING) the composition is skewed to polar residues. Residues 540-563 (TSATTSTTTSNAATKPSLSSSSSV) show a composition bias toward low complexity. Histidine 691 acts as the Proton acceptor in catalysis. The span at 749-766 (TGNVTSKSKQEQAVNEPN) shows a compositional bias: polar residues. The tract at residues 749 to 792 (TGNVTSKSKQEQAVNEPNNRPLKINSKKNNRKKWKKNKKRKFTK) is disordered. Basic residues predominate over residues 773–792 (NSKKNNRKKWKKNKKRKFTK).

Belongs to the peptidase C19 family. Interacts with SIR4. Interacts with the proliferating-cell nuclear antigen PCNA/POL30. Interacts with DHR2 and UTP22.

It localises to the nucleus. Its subcellular location is the chromosome. It is found in the telomere. The protein localises to the nucleolus. It carries out the reaction Thiol-dependent hydrolysis of ester, thioester, amide, peptide and isopeptide bonds formed by the C-terminal Gly of ubiquitin (a 76-residue protein attached to proteins as an intracellular targeting signal).. Functionally, deubiquitinating enzyme involved in telomere and HM loci silencing, which is the repression of chromatin structure which leads to a stop in the transcription of nearby genes. Targets histone H2B for deubiquitination, thus helping to localize SIR2 to the telomere. At silent chromatin, including telomeres and the rDNA locus, not only maintains low H2B 'Lys-123' ubiquitination (H2BK123Ub), but also low H3 'Lys-4' and 'Lys-79' methylation (H3K4me and H3K79me, respectively). Controls the proliferating-cell nuclear antigen PCNA/POL30 deubiquitination which is crucial for keeping TLS polymerases in check as well as for down-regulating the error-free bypass. Deubiquitinates and stabilizes RPA190, the largest subunit of RNA polymerase I, to achieve optimal levels of ribosomes and cell growth. Also protects nutrient transporters such as GAP1 from ubiquitin-dependent endocytosis. The protein is Ubiquitin carboxyl-terminal hydrolase 10 (UBP10) of Saccharomyces cerevisiae (strain ATCC 204508 / S288c) (Baker's yeast).